An 856-amino-acid polypeptide reads, in one-letter code: Inactive rhomboid protein 1 (856 aa).

Positions 1–20 are disordered; it reads MSEARRDSTSSLQRKKPPWL. At 1–412 the chain is on the cytoplasmic side; that stretch reads MSEARRDSTS…HRPFFTYWLT (412 aa). Ser76 and Ser176 each carry phosphoserine. Phosphothreonine is present on residues Thr180 and Thr183. Ser391 carries the post-translational modification Phosphoserine. A helical membrane pass occupies residues 413–433; it reads FVHSLVTILAVCIYGIAPVGF. Residues 434–656 are Lumenal-facing; the sequence is SQHETVDSVL…NPEVPDQFYR (223 aa). Residue Asn584 is glycosylated (N-linked (GlcNAc...) asparagine). Residues 657–677 traverse the membrane as a helical segment; sequence LWLSLFLHAGILHCLVSVCFQ. At 678–692 the chain is on the cytoplasmic side; the sequence is MTVLRDLEKLAGWHR. Residues 693-713 form a helical membrane-spanning segment; that stretch reads IAIIYLLSGVTGNLASAIFLP. At 714–715 the chain is on the lumenal side; the sequence is YR. Residues 716–736 form a helical membrane-spanning segment; the sequence is AEVGPAGSQFGILACLFVELF. Residues 737 to 747 are Cytoplasmic-facing; it reads QSWQILARPWR. Residues 748 to 768 traverse the membrane as a helical segment; that stretch reads AFFKLLAVVLFLFAFGLLPWI. Residues 769–773 lie on the Lumenal side of the membrane; sequence DNFAH. The helical transmembrane segment at 774-794 threads the bilayer; the sequence is ISGFVSGLFLSFAFLPYISFG. Over 795 to 804 the chain is Cytoplasmic; the sequence is KFDLYRKRCQ. A helical transmembrane segment spans residues 805 to 825; the sequence is IIIFQAVFLGLLAGLVVLFYF. Over 826 to 856 the chain is Lumenal; sequence YPVRCEWCEFLTCIPFTDKFCEKYELDAQLH.

This sequence belongs to the peptidase S54 family. In terms of assembly, homodimer, or homooligomer. Interacts with TGFA and HBEGF. Interacts with EGF; may retain EGF in the endoplasmic reticulum and regulates its degradation through the endoplasmic reticulum-associated degradation (ERAD). Interacts (via cytoplasmic N-terminus) with FRMD8/iTAP; this interaction leads to mutual protein stabilization. Interacts with ADAM17/TACE.

It localises to the endoplasmic reticulum membrane. The protein localises to the golgi apparatus membrane. Its function is as follows. Regulates ADAM17 protease, a sheddase of the epidermal growth factor (EGF) receptor ligands and TNF, thereby plays a role in sleep, cell survival, proliferation, migration and inflammation. Does not exhibit any protease activity on its own. This Rattus norvegicus (Rat) protein is Inactive rhomboid protein 1 (Rhbdf1).